Consider the following 246-residue polypeptide: AA9 family lytic polysaccharide monooxygenase D (246 aa).

Residues 1 to 19 form the signal peptide; sequence MHLLSLLFPVIALIPTVLS. His-20 lines the Cu(2+) pocket. An intrachain disulfide couples Cys-78 to Cys-196. N-linked (GlcNAc...) asparagine glycans are attached at residues Asn-86, Asn-141, and Asn-156. O2 contacts are provided by His-182 and Gln-191. Position 193 (Tyr-193) interacts with Cu(2+). Residue Asn-235 is glycosylated (N-linked (GlcNAc...) asparagine).

It belongs to the polysaccharide monooxygenase AA9 family. Requires Cu(2+) as cofactor.

Its subcellular location is the secreted. It carries out the reaction [(1-&gt;4)-beta-D-glucosyl]n+m + reduced acceptor + O2 = 4-dehydro-beta-D-glucosyl-[(1-&gt;4)-beta-D-glucosyl]n-1 + [(1-&gt;4)-beta-D-glucosyl]m + acceptor + H2O.. Lytic polysaccharide monooxygenase (LPMO) that depolymerizes crystalline and amorphous polysaccharides via the oxidation of scissile alpha- or beta-(1-4)-glycosidic bonds, yielding C1 and C4 oxidation products. Catalysis by LPMOs requires the reduction of the active-site copper from Cu(II) to Cu(I) by a reducing agent and H(2)O(2) or O(2) as a cosubstrate. This is AA9 family lytic polysaccharide monooxygenase D from Botryotinia fuckeliana (strain B05.10) (Noble rot fungus).